A 158-amino-acid polypeptide reads, in one-letter code: Glycosyl-phosphatidylinositol-anchored molecule-like protein (158 aa).

A signal peptide spans 1–17; that stretch reads MLLFALLLAMELPLVAA. One can recognise a UPAR/Ly6 domain in the interval 29 to 134; the sequence is LRCHDCAVIN…DEVTEEELPE (106 aa). 5 disulfide bridges follow: C31/C55, C34/C42, C48/C73, C77/C104, and C105/C110.

Its subcellular location is the cell membrane. May play a role in the apoptotic pathway or cell-cycle regulation induced by p53/TP53 after DNA damage. This chain is Glycosyl-phosphatidylinositol-anchored molecule-like protein (GML), found in Homo sapiens (Human).